The primary structure comprises 294 residues: Small ribosomal subunit protein uS2 (294 aa).

Basic and acidic residues predominate over residues 256 to 274; that stretch reads SGKFIMDEDPDSKKTKTAE. The segment at 256–294 is disordered; it reads SGKFIMDEDPDSKKTKTAEEPSATIEPSTTTTVEVDQNE. Residues 280–294 show a composition bias toward polar residues; that stretch reads IEPSTTTTVEVDQNE.

Belongs to the universal ribosomal protein uS2 family.

The sequence is that of Small ribosomal subunit protein uS2 from Leptospira interrogans serogroup Icterohaemorrhagiae serovar Lai (strain 56601).